Consider the following 125-residue polypeptide: UPF0251 protein DSY3441 (125 aa).

It belongs to the UPF0251 family.

The chain is UPF0251 protein DSY3441 from Desulfitobacterium hafniense (strain Y51).